Consider the following 399-residue polypeptide: MTTNTVSRKVAWLRVVTLAIAAFIFNTTEFAPVGLLSDIADSFGMETAQVGMMLTIYAWVVALMSLPFMLLTSKVERRRLLIGLFILFIASHVLSFFAWNFDVLVISRIGIAFAHAVFWSITSALAIRMAPPGKRAQALSLIATGTALAMVFGIPIGRIIGQYFGWRMTFLAIGLGALATLACLVKLLPTLPSEHSGSLKSLPVLFRRPALVSVYILTVVVVTAHYTAYSYIEPFVQTVAGLSGNFATVLLLILGGAGIIGSILFGKLGNQHASGLISLAIALLLACLLLLLPASHNPQHLMLLSIFWGVAIMIIGLGMQVKVLASAPDATDVAMSLFSGIFNIGIGAGALVGSQVSLHLSMASVGYVGAIPALVALVWSLMIFRRWPVSLEDHQPHHS.

12 consecutive transmembrane segments (helical) span residues 15-35 (VVTL…PVGL), 50-70 (VGMM…PFML), 81-101 (LIGL…AWNF), 103-123 (VLVI…SITS), 136-156 (AQAL…GIPI), 168-188 (MTFL…VKLL), 209-229 (PALV…YTAY), 246-266 (FATV…ILFG), 273-293 (ASGL…LLLP), 301-321 (LMLL…GMQV), 333-353 (VAMS…ALVG), and 364-384 (SVGY…LMIF).

The protein belongs to the major facilitator superfamily. SotB (TC 2.A.1.2) family.

The protein resides in the cell inner membrane. In terms of biological role, involved in the efflux of sugars. The physiological role may be the reduction of the intracellular concentration of toxic sugars or sugar metabolites. The sequence is that of Probable sugar efflux transporter from Klebsiella pneumoniae subsp. pneumoniae (strain ATCC 700721 / MGH 78578).